A 1050-amino-acid chain; its full sequence is SGGFDFSFLPQPPQEKDGGRYYGVGLGPGPMGLMGPRGPPGASGAPGPQGFGPAGEPGEPGQTGPAGARGPPGAPGKAGEDGHPGKPGRPGERGVVGPQGARGFPGTPGLPGFKGIRGHNGLDGLKGQPGAGVKGEPGAPGENGTPGQTGARGLPGERGRVGAPGPAGARGSDGSVGPVGPAGPIGSAGPPGFPGAPGPKGELGPVGNTGPSGPAGPRGEQGLPGVSGPVGPPGNPGANGLTGAKGAAGLPGVAGAPGLPGPRGIPGPVGASGATGARGLVGEPGPAGSKGESGNKGEPGSAGPQGPPGSSGEEGKRGPNGESGSTGPTGPPGLRGNPGSRGLPGADGRAGVIGPAGARGASGPAGVRGPSGDTGRPGEPGLMGARGLPGSPGNVGPAGKEGPAGLPGIDGRPGPIGPAGARGEAGNIGFPGPKGPAGDPGKAGEKGHAGLAGNRGAPGPDGNNGAQGPPGPQGVQGGKGEQGPAGPPGFQGLPGPAGTTGEAGKPGERGIPGEFGLPGPAGPRGERGPPGESGAVGPSGAIGSRGPSGPPGPDGNKGEPGVVTAGPAGSGGLPGERGAAGIPGGKGEKGETGLRGEVGTTGRDGARGAPGAVGAPGPAGATGDRGEAGAAGPAGPAGPRGSPGERGEVGPAGPNGFAGPAGAAGQPGAKGERGTKGPKGENGIVGPTGPVGSAGPAGPNGPAGPAGSRGDGGPPGMTGFPGAAGRTGPPGPSGITGPPGPPGAAGKEGLRGPRGDQGPVGRTGETGAGGPPGFTGEKGPSGEPGTAGPPGTAGPQGLLGAPGILGLPGSRGERGLPGVAGAVGEPGPLGIAGPPGARGPSGAVGPGVNGAPGETGRDGNPGSDGPPGRDGLPGHKGERGYAGNAGPVGAAGAPGPHGTVGPAGKHGNRGEPGPVGSVGPVGALGPRGPSGPQGIRGDKGEPGDKGPRGLPGLKGHNGLQGLPGLAGQHGDQGSPGPVGPAGPRGPAGPSGPAGKDGRTGHPGAVGPAGIRGSQGSQGPSGPPGPPGPPGPPGASGGGYDFGYEGDFYRA.

Residues 1–1050 (SGGFDFSFLP…FGYEGDFYRA (1050 aa)) are disordered. 4-hydroxyproline occurs at positions 10 and 13. Residues 20–32 (RYYGVGLGPGPMG) are compositionally biased toward gly residues. Low complexity-rich tracts occupy residues 33 to 46 (LMGPRGPPGASGAP) and 56 to 77 (EPGEPGQTGPAGARGPPGAPGK). 2 positions are modified to 4-hydroxyproline: Pro40 and Pro46. The span at 78-92 (AGEDGHPGKPGRPGE) shows a compositional bias: basic and acidic residues. 5-hydroxylysine; alternate is present on Lys114. An O-linked (Gal...) hydroxylysine; alternate glycan is attached at Lys114. 5 stretches are compositionally biased toward low complexity: residues 161–190 (VGAPGPAGARGSDGSVGPVGPAGPIGSAGP), 236–257 (PGANGLTGAKGAAGLPGVAGAP), 298–311 (EPGSAGPQGPPGSS), 320–338 (NGESGSTGPTGPPGLRGNP), and 355–371 (PAGARGASGPAGVRGPS). A 4-hydroxyproline mark is found at Pro377 and Pro380. Composition is skewed to low complexity over residues 406 to 425 (LPGIDGRPGPIGPAGARGEA) and 452 to 467 (AGNRGAPGPDGNNGAQ). The span at 474 to 483 (GVQGGKGEQG) shows a compositional bias: gly residues. Composition is skewed to low complexity over residues 530–547 (PGESGAVGPSGAIGSRGP), 598–642 (VGTT…PRGS), and 649–669 (VGPAGPNGFAGPAGAAGQPGA). Basic and acidic residues predominate over residues 670-679 (KGERGTKGPK). Positions 687–697 (PTGPVGSAGPA) are enriched in low complexity. Gly residues predominate over residues 707–716 (GSRGDGGPPG). Residues 718–727 (TGFPGAAGRT) show a composition bias toward low complexity. Gly residues predominate over residues 764–773 (GETGAGGPPG). Composition is skewed to low complexity over residues 781 to 808 (SGEPGTAGPPGTAGPQGLLGAPGILGLP), 816 to 841 (LPGVAGAVGEPGPLGIAGPPGARGPS), 881 to 903 (YAGNAGPVGAAGAPGPHGTVGPA), and 911 to 926 (EPGPVGSVGPVGALGP). The segment covering 936–947 (RGDKGEPGDKGP) has biased composition (basic and acidic residues). The span at 1020 to 1032 (SGPPGPPGPPGPP) shows a compositional bias: pro residues.

The protein belongs to the fibrillar collagen family. In terms of assembly, trimers of one alpha 2(I) and two alpha 1(I) chains. Interacts (via C-terminus) with TMEM131 (via PapD-L domain); the interaction is direct and is involved in assembly and TRAPPIII ER-to-Golgi transport complex-dependent secretion of collagen. In terms of processing, prolines at the third position of the tripeptide repeating unit (G-X-Y) are hydroxylated in some or all of the chains. As to expression, expressed in bones.

The protein localises to the secreted. It is found in the extracellular space. The protein resides in the extracellular matrix. Functionally, type I collagen is a member of group I collagen (fibrillar forming collagen). The protein is Collagen alpha-2(I) chain of Megatherium americanum (Giant ground sloth).